The sequence spans 262 residues: 14-3-3 protein homolog (262 aa).

The protein belongs to the 14-3-3 family.

This Trichoderma harzianum (Hypocrea lixii) protein is 14-3-3 protein homolog.